A 188-amino-acid polypeptide reads, in one-letter code: Peptide deformylase (188 aa).

Fe cation is bound by residues Cys-109 and His-152. Glu-153 is a catalytic residue. His-156 is a binding site for Fe cation.

This sequence belongs to the polypeptide deformylase family. The cofactor is Fe(2+).

It catalyses the reaction N-terminal N-formyl-L-methionyl-[peptide] + H2O = N-terminal L-methionyl-[peptide] + formate. Removes the formyl group from the N-terminal Met of newly synthesized proteins. Requires at least a dipeptide for an efficient rate of reaction. N-terminal L-methionine is a prerequisite for activity but the enzyme has broad specificity at other positions. This chain is Peptide deformylase, found in Chloroflexus aurantiacus (strain ATCC 29366 / DSM 635 / J-10-fl).